The following is a 240-amino-acid chain: Dihydromonapterin reductase (240 aa).

Tyr-152 serves as the catalytic Proton acceptor.

It belongs to the short-chain dehydrogenases/reductases (SDR) family. FolM subfamily.

The enzyme catalyses (6S)-5,6,7,8-tetrahydrofolate + NADP(+) = 7,8-dihydrofolate + NADPH + H(+). It catalyses the reaction 7,8-dihydromonapterin + NADPH + H(+) = 5,6,7,8-tetrahydromonapterin + NADP(+). Catalyzes the reduction of dihydromonapterin to tetrahydromonapterin. Also has lower activity with dihydrofolate. The polypeptide is Dihydromonapterin reductase (folM) (Escherichia coli (strain SMS-3-5 / SECEC)).